We begin with the raw amino-acid sequence, 720 residues long: MITANSFERTIGGRKLTIESGKMARLADAAVTIRYADTELLVTLCAAKKPREGVDFLPLTIDYEERMYAAGKIPGGFIRREGRPSEQAILAGRLTDRPLRPLLPKEWRNELQIIITVIASDKENDADIWGVVGASTVLTMSQIPYEGPVGASRVGYTNGEFVLNPTFAQLEQSQMDLVVVSTRKAVVMIEAGSKEIPEDLMIKAIEFAHQANQELIDLQDEIRAKLGKEKLPVPVLEIPEEVKAAVAAFVKGRVNEALSHQDKTLRENAVEALQSELVEALAETYAEGDILAAYDKEIKKAIRSTILEKDIRVNGRGIKQLRQLDAETGILPRVHGSALFTRGDTQVMAITTLGSLQEAQQLDGLSAEDTKRFMLHYNFAPFSTGEVKRSGSPGRREIGHGALAERALVPVLPTPEEFPYTIRMVADVVGSSGSTSMGSVCSSSLSLMDAGVPVKKAVAGISIGLITGENDTYCTITDIEGIEDNYGDMDFKVAGTRDGITAIQVDMKVKGISFDVIRDAIYQAKEARYTILEVMDKALAQPKTELSPYAPRMYKISIDPSKIGSVIGSGGKTIRSIIEQTNTTVDIENDGTVVIGATDEASAQKAIKIIEDLTKDVEAGSVYTGKVTRIMTFGAFVEILPGKEGMVHISELADHRVEKVEDVVKVGDEITVKVTEIDSQGRINLSRRVILNPNAVPISRNRDSQPRRSGPFRPQDRSNS.

Positions 484 and 490 each coordinate Mg(2+). The 60-residue stretch at 551-610 (PRMYKISIDPSKIGSVIGSGGKTIRSIIEQTNTTVDIENDGTVVIGATDEASAQKAIKII) folds into the KH domain. Residues 620–688 (GSVYTGKVTR…SQGRINLSRR (69 aa)) enclose the S1 motif domain. Positions 697–720 (PISRNRDSQPRRSGPFRPQDRSNS) are disordered.

This sequence belongs to the polyribonucleotide nucleotidyltransferase family. Mg(2+) serves as cofactor.

The protein localises to the cytoplasm. It catalyses the reaction RNA(n+1) + phosphate = RNA(n) + a ribonucleoside 5'-diphosphate. Functionally, involved in mRNA degradation. Catalyzes the phosphorolysis of single-stranded polyribonucleotides processively in the 3'- to 5'-direction. This Dehalococcoides mccartyi (strain ATCC BAA-2266 / KCTC 15142 / 195) (Dehalococcoides ethenogenes (strain 195)) protein is Polyribonucleotide nucleotidyltransferase.